We begin with the raw amino-acid sequence, 367 residues long: Glutamate 5-kinase (367 aa).

An ATP-binding site is contributed by Lys10. Residues Ser50, Asp137, and Asn149 each contribute to the substrate site. Residues 169–170 (TD) and 211–217 (TGGMATK) contribute to the ATP site. A PUA domain is found at 275 to 353 (AGEITVDDGA…QQISEILGYE (79 aa)).

This sequence belongs to the glutamate 5-kinase family.

The protein localises to the cytoplasm. It catalyses the reaction L-glutamate + ATP = L-glutamyl 5-phosphate + ADP. It participates in amino-acid biosynthesis; L-proline biosynthesis; L-glutamate 5-semialdehyde from L-glutamate: step 1/2. Its function is as follows. Catalyzes the transfer of a phosphate group to glutamate to form L-glutamate 5-phosphate. The protein is Glutamate 5-kinase of Yersinia enterocolitica serotype O:8 / biotype 1B (strain NCTC 13174 / 8081).